The sequence spans 293 residues: Diaminopimelate epimerase (293 aa).

Asn-17, Gln-47, and Asn-67 together coordinate substrate. The Proton donor role is filled by Cys-76. Substrate contacts are provided by residues 77–78 (GN), Asn-164, Asn-197, and 215–216 (ER). The Proton acceptor role is filled by Cys-224. 225–226 (GS) provides a ligand contact to substrate.

This sequence belongs to the diaminopimelate epimerase family. Homodimer.

Its subcellular location is the cytoplasm. It catalyses the reaction (2S,6S)-2,6-diaminopimelate = meso-2,6-diaminopimelate. The protein operates within amino-acid biosynthesis; L-lysine biosynthesis via DAP pathway; DL-2,6-diaminopimelate from LL-2,6-diaminopimelate: step 1/1. Its function is as follows. Catalyzes the stereoinversion of LL-2,6-diaminopimelate (L,L-DAP) to meso-diaminopimelate (meso-DAP), a precursor of L-lysine and an essential component of the bacterial peptidoglycan. This Rhodopseudomonas palustris (strain BisB5) protein is Diaminopimelate epimerase.